Consider the following 864-residue polypeptide: Probable LRR receptor-like serine/threonine-protein kinase At1g07550 (864 aa).

The N-terminal stretch at 1 to 23 is a signal peptide; sequence MDTCTRLLFAACATLSILHLVQS. The Extracellular segment spans residues 24–507; it reads QNQQGFISLD…SCGTRFPTAA (484 aa). N-linked (GlcNAc...) asparagine glycosylation is found at N49, N229, N256, N289, N432, N445, and N464. LRR repeat units lie at residues 411–434, 435–457, and 459–480; these read RIVK…QNLT, QLQE…LAKM, and YLLV…ALLD. A helical membrane pass occupies residues 508 to 528; sequence VAASVSAVAIIILVLVLIFVL. The Cytoplasmic portion of the chain corresponds to 529 to 864; sequence RRRKPSAGKV…VDTEINPKAR (336 aa). T551 is subject to Phosphothreonine. One can recognise a Protein kinase domain in the interval 560–831; that stretch reads NNFQVVIGKG…QVVHVLNECL (272 aa). Residues 566 to 574 and K587 contribute to the ATP site; that span reads IGKGGFGVV. Phosphotyrosine is present on Y632. D684 (proton acceptor) is an active-site residue. 2 positions are modified to phosphothreonine: T718 and T723. Position 731 is a phosphotyrosine (Y731).

Belongs to the protein kinase superfamily. Ser/Thr protein kinase family.

The protein resides in the membrane. It carries out the reaction L-seryl-[protein] + ATP = O-phospho-L-seryl-[protein] + ADP + H(+). The catalysed reaction is L-threonyl-[protein] + ATP = O-phospho-L-threonyl-[protein] + ADP + H(+). The chain is Probable LRR receptor-like serine/threonine-protein kinase At1g07550 from Arabidopsis thaliana (Mouse-ear cress).